The primary structure comprises 818 residues: LPS-assembly protein LptD (818 aa).

An N-terminal signal peptide occupies residues 1–33 (MVNETMKHQFKFNPLATAIFTLLCSGSIQSSYA).

Belongs to the LptD family. Component of the lipopolysaccharide transport and assembly complex. Interacts with LptE and LptA.

The protein localises to the cell outer membrane. In terms of biological role, together with LptE, is involved in the assembly of lipopolysaccharide (LPS) at the surface of the outer membrane. This Acinetobacter baumannii (strain ATCC 19606 / DSM 30007 / JCM 6841 / CCUG 19606 / CIP 70.34 / NBRC 109757 / NCIMB 12457 / NCTC 12156 / 81) protein is LPS-assembly protein LptD.